The following is a 339-amino-acid chain: DNA-directed RNA polymerase subunit alpha (339 aa).

Positions 1-233 (MVREEVAGST…DLFLPFLHAE (233 aa)) are alpha N-terminal domain (alpha-NTD). The tract at residues 264–339 (KKGIPLNCIF…IDLLKNKLSF (76 aa)) is alpha C-terminal domain (alpha-CTD).

The protein belongs to the RNA polymerase alpha chain family. In terms of assembly, in plastids the minimal PEP RNA polymerase catalytic core is composed of four subunits: alpha, beta, beta', and beta''. When a (nuclear-encoded) sigma factor is associated with the core the holoenzyme is formed, which can initiate transcription.

The protein localises to the plastid. The protein resides in the chloroplast. It carries out the reaction RNA(n) + a ribonucleoside 5'-triphosphate = RNA(n+1) + diphosphate. Functionally, DNA-dependent RNA polymerase catalyzes the transcription of DNA into RNA using the four ribonucleoside triphosphates as substrates. The polypeptide is DNA-directed RNA polymerase subunit alpha (Agropyron cristatum (Crested wheatgrass)).